Reading from the N-terminus, the 1070-residue chain is Probable arabinosyltransferase C (1070 aa).

12 consecutive transmembrane segments (helical) span residues Ile-10–Leu-32, Leu-210–Leu-232, Ser-247–Val-269, Val-399–Gly-421, Ile-425–Leu-442, Phe-449–Arg-471, Ser-512–Leu-534, Ser-547–Thr-564, Val-574–Arg-596, Val-603–Val-625, Thr-645–Val-664, and Ser-685–Ile-707.

It belongs to the emb family.

Its subcellular location is the cell membrane. Arabinosyl transferase responsible for the polymerization of arabinose into the arabinan of arabinogalactan. In Mycobacterium leprae (strain TN), this protein is Probable arabinosyltransferase C (embC).